A 329-amino-acid polypeptide reads, in one-letter code: Bifunctional muramidase/DL-endopeptidase CwlT (329 aa).

The first 29 residues, 1 to 29 (MISKKVVLPLVFSAPFIFFFVLCIVVVMT), serve as a signal peptide directing secretion. Residues 59 to 192 (RFRAVFEKYA…SYVDHVMRYV (134 aa)) are muramidase. Positions 206-329 (MDFYETVMKE…DHLVSFGRIK (124 aa)) constitute a NlpC/P60 domain. The Nucleophile role is filled by Cys-237. The active-site Proton acceptor is His-290. Residue Asn-302 is part of the active site.

This sequence belongs to the peptidase C40 family.

Its subcellular location is the secreted. It carries out the reaction Hydrolysis of (1-&gt;4)-beta-linkages between N-acetylmuramic acid and N-acetyl-D-glucosamine residues in a peptidoglycan and between N-acetyl-D-glucosamine residues in chitodextrins.. Its function is as follows. Exhibits both muramidase and DL-endopeptidase activities. The N-terminal region acts as a N-acetylmuramidase, which cleaves the bond between N-acetylmuramic acid and N-acetyl-D-glucosamine (MurNAc-GlcNAc) in peptidoglycan. The C-terminal region acts as a DL-endopeptidase that cleaves the bond between D-gamma-glutamate and meso-diaminopimelic acid. Cannot degrade purified B.anthracis peptidoglycan, which differ from those of B.subtilis. CwlT is required for ICEBs1 conjugation: the muramidase activity is essential, whereas the peptidase activity is partially dispensable for transfer of ICEBs1. This chain is Bifunctional muramidase/DL-endopeptidase CwlT, found in Bacillus subtilis (strain 168).